Consider the following 75-residue polypeptide: Protein SlyX homolog (75 aa).

This sequence belongs to the SlyX family.

This chain is Protein SlyX homolog, found in Vibrio vulnificus (strain CMCP6).